We begin with the raw amino-acid sequence, 461 residues long: Cysteine--tRNA ligase (461 aa).

A Zn(2+)-binding site is contributed by Cys28. Residues Ile30–His40 carry the 'HIGH' region motif. Positions 209, 234, and 238 each coordinate Zn(2+). The short motif at Lys266 to Ser270 is the 'KMSKS' region element. Lys269 lines the ATP pocket.

It belongs to the class-I aminoacyl-tRNA synthetase family. Monomer. The cofactor is Zn(2+).

The protein resides in the cytoplasm. It catalyses the reaction tRNA(Cys) + L-cysteine + ATP = L-cysteinyl-tRNA(Cys) + AMP + diphosphate. This Escherichia coli O157:H7 protein is Cysteine--tRNA ligase.